Reading from the N-terminus, the 96-residue chain is Large ribosomal subunit protein bL21 (96 aa).

It belongs to the bacterial ribosomal protein bL21 family. As to quaternary structure, part of the 50S ribosomal subunit. Contacts protein L20.

Its function is as follows. This protein binds to 23S rRNA in the presence of protein L20. This is Large ribosomal subunit protein bL21 from Chlorobium phaeobacteroides (strain BS1).